Here is a 344-residue protein sequence, read N- to C-terminus: GTP 3',8-cyclase (344 aa).

The Radical SAM core domain occupies 19–245 (PFGRAVTYLR…DIPYRTGGPA (227 aa)). Residue Arg28 participates in GTP binding. [4Fe-4S] cluster is bound by residues Cys35 and Cys39. Tyr41 provides a ligand contact to S-adenosyl-L-methionine. Cys42 serves as a coordination point for [4Fe-4S] cluster. A GTP-binding site is contributed by Arg77. Gly81 is an S-adenosyl-L-methionine binding site. Thr111 lines the GTP pocket. Ser135 contributes to the S-adenosyl-L-methionine binding site. Lys171 provides a ligand contact to GTP. An S-adenosyl-L-methionine-binding site is contributed by Met205. [4Fe-4S] cluster-binding residues include Cys268 and Cys271. 273–275 (RVR) is a binding site for GTP. Position 285 (Cys285) interacts with [4Fe-4S] cluster.

Belongs to the radical SAM superfamily. MoaA family. In terms of assembly, monomer and homodimer. It depends on [4Fe-4S] cluster as a cofactor.

The enzyme catalyses GTP + AH2 + S-adenosyl-L-methionine = (8S)-3',8-cyclo-7,8-dihydroguanosine 5'-triphosphate + 5'-deoxyadenosine + L-methionine + A + H(+). The protein operates within cofactor biosynthesis; molybdopterin biosynthesis. Catalyzes the cyclization of GTP to (8S)-3',8-cyclo-7,8-dihydroguanosine 5'-triphosphate. The protein is GTP 3',8-cyclase of Brucella canis (strain ATCC 23365 / NCTC 10854 / RM-666).